A 209-amino-acid polypeptide reads, in one-letter code: Chloramphenicol acetyltransferase (209 aa).

His-78 is an active-site residue.

This sequence belongs to the transferase hexapeptide repeat family.

It carries out the reaction chloramphenicol + acetyl-CoA = chloramphenicol 3-acetate + CoA. This enzyme is an effector of chloramphenicol resistance in bacteria. This Agrobacterium fabrum (strain C58 / ATCC 33970) (Agrobacterium tumefaciens (strain C58)) protein is Chloramphenicol acetyltransferase (cat).